Consider the following 98-residue polypeptide: MTAKPEHYDVIRKPVITEKATMTSEANGVVFAVAMDATKPQIKEAVEAIFNVKVKAVNTTITKGKTKKFKGRPGVRSDRKKAYVTLEEGNTIDVSTGL.

Belongs to the universal ribosomal protein uL23 family. In terms of assembly, part of the 50S ribosomal subunit. Contacts protein L29, and trigger factor when it is bound to the ribosome.

Functionally, one of the early assembly proteins it binds 23S rRNA. One of the proteins that surrounds the polypeptide exit tunnel on the outside of the ribosome. Forms the main docking site for trigger factor binding to the ribosome. This chain is Large ribosomal subunit protein uL23, found in Cereibacter sphaeroides (strain ATCC 17025 / ATH 2.4.3) (Rhodobacter sphaeroides).